The primary structure comprises 502 residues: Cytochrome P450 2J3 (502 aa).

C448 lines the heme pocket.

The protein belongs to the cytochrome P450 family. Heme serves as cofactor. As to expression, abundantly expressed in heart and liver.

Its subcellular location is the endoplasmic reticulum membrane. It localises to the microsome membrane. It catalyses the reaction an organic molecule + reduced [NADPH--hemoprotein reductase] + O2 = an alcohol + oxidized [NADPH--hemoprotein reductase] + H2O + H(+). This enzyme metabolizes arachidonic acid predominantly via a NADPH-dependent olefin epoxidation mainly to 14,15-, 11,12-, and 8,9-epoxyeicosatrienoic acids (EET). It also acts as an omega-1-hydroxylase by metabolizing arachidonic acid to 19-hydroxyeicosatetraenoic acid (19-OH-AA). The sequence is that of Cytochrome P450 2J3 (Cyp2j3) from Rattus norvegicus (Rat).